Consider the following 267-residue polypeptide: 4-hydroxy-tetrahydrodipicolinate reductase (267 aa).

10–15 contacts NAD(+); it reads GCLGKQ. Arg37 contributes to the NADP(+) binding site. Residues 99-101 and 122-125 each bind NAD(+); these read GTT and TTNV. The active-site Proton donor/acceptor is His154. His155 contributes to the (S)-2,3,4,5-tetrahydrodipicolinate binding site. The active-site Proton donor is the Lys158. (S)-2,3,4,5-tetrahydrodipicolinate is bound at residue 164–165; that stretch reads GT.

The protein belongs to the DapB family.

It is found in the cytoplasm. The enzyme catalyses (S)-2,3,4,5-tetrahydrodipicolinate + NAD(+) + H2O = (2S,4S)-4-hydroxy-2,3,4,5-tetrahydrodipicolinate + NADH + H(+). It carries out the reaction (S)-2,3,4,5-tetrahydrodipicolinate + NADP(+) + H2O = (2S,4S)-4-hydroxy-2,3,4,5-tetrahydrodipicolinate + NADPH + H(+). The protein operates within amino-acid biosynthesis; L-lysine biosynthesis via DAP pathway; (S)-tetrahydrodipicolinate from L-aspartate: step 4/4. Catalyzes the conversion of 4-hydroxy-tetrahydrodipicolinate (HTPA) to tetrahydrodipicolinate. This chain is 4-hydroxy-tetrahydrodipicolinate reductase, found in Ehrlichia canis (strain Jake).